The sequence spans 200 residues: Recombination protein RecR (200 aa).

Residues 59-74 (CSTCGSLDTQDPCAIC) form a C4-type zinc finger. The 96-residue stretch at 82 to 177 (SLICVVEEVG…TVSMLARGVP (96 aa)) folds into the Toprim domain.

The protein belongs to the RecR family.

Its function is as follows. May play a role in DNA repair. It seems to be involved in an RecBC-independent recombinational process of DNA repair. It may act with RecF and RecO. The polypeptide is Recombination protein RecR (Phenylobacterium zucineum (strain HLK1)).